Reading from the N-terminus, the 409-residue chain is Phospholipase ABHD3 (409 aa).

A helical; Signal-anchor for type II membrane protein membrane pass occupies residues glycine 26–phenylalanine 46. Residues proline 140 to isoleucine 233 enclose the AB hydrolase-1 domain. Catalysis depends on charge relay system residues serine 220, aspartate 346, and histidine 375.

The protein belongs to the AB hydrolase superfamily. AB hydrolase 4 family.

It is found in the membrane. The enzyme catalyses a 1,2-diacyl-sn-glycero-3-phosphocholine + H2O = a 1-acyl-sn-glycero-3-phosphocholine + a fatty acid + H(+). The catalysed reaction is a 1,2-diacyl-sn-glycero-3-phosphocholine + H2O = a 2-acyl-sn-glycero-3-phosphocholine + a fatty acid + H(+). It catalyses the reaction 1-tetradecanoyl-2-(9Z,12Z-octadecadienoyl)-sn-glycero-3-phosphocholine + H2O = 2-(9Z,12Z-octadecadienoyl)-sn-glycero-3-phosphocholine + tetradecanoate + H(+). It carries out the reaction 1-tetradecanoyl-2-(9Z,12Z-octadecadienoyl)-sn-glycero-3-phosphocholine + H2O = 1-tetradecanoyl-sn-glycero-3-phosphocholine + (9Z,12Z)-octadecadienoate + H(+). The enzyme catalyses 1-tetradecanoyl-2-(5Z,8Z,11Z,14Z-eicosatetraenoyl)-sn-glycero-3-phosphocholine + H2O = 2-(5Z,8Z,11Z,14Z)-eicosatetraenoyl-sn-glycero-3-phosphocholine + tetradecanoate + H(+). The catalysed reaction is 1-tetradecanoyl-2-(4Z,7Z,10Z,13Z,16Z,19Z-docosahexaenoyl)-sn-glycero-3-phosphocholine + H2O = 2-(4Z,7Z,10Z,13Z,16Z,19Z-docosahexaenoyl)-sn-glycero-3-phosphocholine + tetradecanoate + H(+). It catalyses the reaction 1,2-ditetradecanoyl-sn-glycero-3-phosphocholine + H2O = 2-tetradecanoyl-sn-glycero-3-phosphocholine + tetradecanoate + H(+). It carries out the reaction 1-octadecanoyl-2-acetyl-sn-glycero-3-phosphocholine + H2O = 1-octadecanoyl-sn-glycero-3-phosphocholine + acetate + H(+). The enzyme catalyses 1,2-ditetradecanoyl-sn-glycero-3-phosphocholine + H2O = 1-tetradecanoyl-sn-glycero-3-phosphocholine + tetradecanoate + H(+). The catalysed reaction is 1-octadecanoyl-2-pentanoyl-sn-glycero-3-phosphocholine + H2O = pentanoate + 1-octadecanoyl-sn-glycero-3-phosphocholine + H(+). It catalyses the reaction 1-octadecanoyl-2-hexanoyl-sn-glycero-3-phosphocholine + H2O = hexanoate + 1-octadecanoyl-sn-glycero-3-phosphocholine + H(+). It carries out the reaction 1-octadecanoyl-2-octanoyl-sn-glycero-3-phosphocholine + H2O = 1-octadecanoyl-sn-glycero-3-phosphocholine + octanoate + H(+). The enzyme catalyses 1-octadecanoyl-2-nonanoyl-sn-glycero-3-phosphocholine + H2O = nonanoate + 1-octadecanoyl-sn-glycero-3-phosphocholine + H(+). The catalysed reaction is 1-O-hexadecyl-2-nonadioyl-sn-glycero-3-phosphocholine + H2O = nonanedioate + 1-O-hexadecyl-sn-glycero-3-phosphocholine + H(+). It catalyses the reaction 1-hexadecanoyl-2-nonadioyl-sn-glycero-3-phosphocholine + H2O = nonanedioate + 1-hexadecanoyl-sn-glycero-3-phosphocholine + H(+). It carries out the reaction 1-hexadecanoyl-2-(9-oxononanoyl)-sn-glycero-3-phosphocholine + H2O = 9-oxononanoate + 1-hexadecanoyl-sn-glycero-3-phosphocholine + H(+). The enzyme catalyses 1-hexadecanoyl-2-(5-oxopentanoyl)-sn-glycero-3-phosphocholine + H2O = 5-oxopentanoate + 1-hexadecanoyl-sn-glycero-3-phosphocholine + H(+). The catalysed reaction is 1-hexadecanoyl-2-glutaroyl-sn-glycero-3-phosphocholine + H2O = glutarate + 1-hexadecanoyl-sn-glycero-3-phosphocholine + H(+). It catalyses the reaction 1-O-hexadecyl-2-acetyl-sn-glycero-3-phosphocholine + H2O = 1-O-hexadecyl-sn-glycero-3-phosphocholine + acetate + H(+). In terms of biological role, phospholipase that may play a role in phospholipids remodeling. May selectively cleave myristate (C14)-containing phosphatidylcholines through its predominant phospholipase 1 activity, cleaving preferentially acyl groups in sn1 position. In parallel, may have a minor phospholipase 2 activity acting on acyl groups in position sn2. In addition to (C14)-containing phosphatidylcholines, may also act on other medium-chain-containing and oxidatively truncated phospholipids. This is Phospholipase ABHD3 from Homo sapiens (Human).